We begin with the raw amino-acid sequence, 57 residues long: Large ribosomal subunit protein bL33 (57 aa).

It belongs to the bacterial ribosomal protein bL33 family.

This chain is Large ribosomal subunit protein bL33, found in Shewanella pealeana (strain ATCC 700345 / ANG-SQ1).